A 192-amino-acid polypeptide reads, in one-letter code: Cell division protein SepF (192 aa).

Positions 154–192 (QEEPAPSNVTTTTQQSEETISESVTAPEPAWGTPVASAI) are disordered. A compositionally biased stretch (low complexity) spans 162-178 (VTTTTQQSEETISESVT).

This sequence belongs to the SepF family. Homodimer. Interacts with FtsZ.

It localises to the cytoplasm. Cell division protein that is part of the divisome complex and is recruited early to the Z-ring. Probably stimulates Z-ring formation, perhaps through the cross-linking of FtsZ protofilaments. Its function overlaps with FtsA. This Prochlorococcus marinus (strain MIT 9211) protein is Cell division protein SepF.